Consider the following 89-residue polypeptide: Prostaglandin E2 receptor EP3 subtype (89 aa).

A helical membrane pass occupies residues 1–18 (GVWLAVLAFALLPVLGVG). Residues 19 to 48 (QYTIQWPGTWCFISTGPGGNGTNSRQNWGN) lie on the Extracellular side of the membrane. Asn-38 is a glycosylation site (N-linked (GlcNAc...) asparagine). A helical transmembrane segment spans residues 49–74 (VFFASDFAILGLSALVVTFACNLATI). The Cytoplasmic portion of the chain corresponds to 75–89 (KALVSRCRAKATASQ).

It belongs to the G-protein coupled receptor 1 family. Interacts (via C-terminus) with MKLN1.

The protein localises to the cell membrane. Receptor for prostaglandin E2 (PGE2). Required for normal development of fever in response to pyrinogens, including IL1B, prostaglandin E2 and bacterial lipopolysaccharide (LPS). Required for normal potentiation of platelet aggregation by prostaglandin E2, and thus plays a role in the regulation of blood coagulation. Required for increased HCO3(-) secretion in the duodenum in response to mucosal acidification, and thereby contributes to the protection of the mucosa against acid-induced ulceration. Not required for normal kidney function, normal urine volume and osmolality. The chain is Prostaglandin E2 receptor EP3 subtype (PTGER3) from Ovis aries (Sheep).